The primary structure comprises 897 residues: Serine/threonine-protein kinase ATG1 (897 aa).

In terms of domain architecture, Protein kinase spans 24–325 (YTAEKEIGKG…FEEFFANKVV (302 aa)). Residues 30–38 (IGKGSFATV) and lysine 54 each bind ATP. Position 34 is a phosphoserine (serine 34). Threonine 129 carries the post-translational modification Phosphothreonine. Aspartate 172 (proton acceptor) is an active-site residue. Threonine 226 is modified (phosphothreonine; by autocatalysis). Serine 304, serine 365, and serine 390 each carry phosphoserine. Positions 429-432 (YVVV) match the LIR motif. Positions 490–509 (LLRATSSSSGGSDGSRRPSL) are disordered. Phosphoserine; by PKA is present on residues serine 508 and serine 515. A phosphoserine mark is found at serine 533, serine 551, and serine 552. Threonine 590 carries the phosphothreonine modification. Residues serine 621, serine 635, serine 638, serine 647, serine 677, serine 680, serine 683, serine 769, and serine 783 each carry the phosphoserine modification. The segment at 880–886 (DSIANRL) is required for Cvt trafficking.

The protein belongs to the protein kinase superfamily. Ser/Thr protein kinase family. APG1/unc-51/ULK1 subfamily. In terms of assembly, homodimer. Dimerization requires the presence of ATG13. Forms a ternary complex with ATG13 and ATG17. Also interacts with ATG11. In terms of processing, autophosphorylated at Thr-226 and Ser-390. The phosphorylation state may play a role in the induction of protein degradation upon starvation. Phosphorylation at Thr-226 within the activation loop is required for protein kinase activity whereas phosphorylation at Ser-34 leads to inhibition of kinase activity. Phosphorylation of Ser-508 and Ser-515 by PKA is required to induce autophagy but not for kinase activity.

It localises to the cytoplasm. Its subcellular location is the preautophagosomal structure membrane. It carries out the reaction L-seryl-[protein] + ATP = O-phospho-L-seryl-[protein] + ADP + H(+). The catalysed reaction is L-threonyl-[protein] + ATP = O-phospho-L-threonyl-[protein] + ADP + H(+). Activated by hypophosphorylated form of ATG13 (present in nitrogen starvation conditions). Also activated by autophopsphorylation of Thr-226 and inhibited by phosphorylation of Ser-34. In terms of biological role, serine/threonine protein kinase involved in the cytoplasm to vacuole transport (Cvt) and found to be essential in autophagy, where it is required for the formation of autophagosomes. Involved in the clearance of protein aggregates which cannot be efficiently cleared by the proteasome. Required for selective autophagic degradation of the nucleus (nucleophagy) as well as for mitophagy which contributes to regulate mitochondrial quantity and quality by eliminating the mitochondria to a basal level to fulfill cellular energy requirements and preventing excess ROS production. Also involved in endoplasmic reticulum-specific autophagic process, in selective removal of ER-associated degradation (ERAD) substrates. Plays a key role in ATG9 and ATG23 cycling through the pre-autophagosomal structure and is necessary to promote ATG18 binding to ATG9 through phosphorylation of ATG9. Catalyzes phosphorylation of ATG4, decreasing the interaction between ATG4 and ATG8 and impairing deconjugation of PE-conjugated forms of ATG8. Finally, ATG1 is also required for the maintenance of cell viability under starvation and for glycogen storage during stationary phase. Plays a role in genome stability through suppression of abnormal mitosis under starvation, and in regulation of filamentous growth. This chain is Serine/threonine-protein kinase ATG1, found in Saccharomyces cerevisiae (strain YJM789) (Baker's yeast).